The following is a 274-amino-acid chain: 2-dehydro-3-deoxyphosphooctonate aldolase (274 aa).

The protein belongs to the KdsA family.

Its subcellular location is the cytoplasm. The catalysed reaction is D-arabinose 5-phosphate + phosphoenolpyruvate + H2O = 3-deoxy-alpha-D-manno-2-octulosonate-8-phosphate + phosphate. The protein operates within carbohydrate biosynthesis; 3-deoxy-D-manno-octulosonate biosynthesis; 3-deoxy-D-manno-octulosonate from D-ribulose 5-phosphate: step 2/3. Its pathway is bacterial outer membrane biogenesis; lipopolysaccharide biosynthesis. The polypeptide is 2-dehydro-3-deoxyphosphooctonate aldolase (Rickettsia canadensis (strain McKiel)).